A 526-amino-acid polypeptide reads, in one-letter code: Lysine--tRNA ligase (526 aa).

Residues Glu-431 and Glu-438 each contribute to the Mg(2+) site.

This sequence belongs to the class-II aminoacyl-tRNA synthetase family. Homodimer. Mg(2+) is required as a cofactor.

The protein localises to the cytoplasm. It catalyses the reaction tRNA(Lys) + L-lysine + ATP = L-lysyl-tRNA(Lys) + AMP + diphosphate. This is Lysine--tRNA ligase (lysS) from Chlamydia trachomatis serovar D (strain ATCC VR-885 / DSM 19411 / UW-3/Cx).